Reading from the N-terminus, the 318-residue chain is MALPIIVKWGGQEYSVTTLSEDDTVLDLKQFLKTLTGVLPERQKLLGLKVKGKPAENDVKLGALKLKPNTKIMMMGTREESLEDVLGPPPDNDDVVNDFDIEDEVVEVENREENLLKISRRVKEYKVEILNPPREGKKLLVLDVDYTLFDHRSCAETGVELMRPYLHEFLTSAYEDYDIVIWSATNMKWIEAKMKELGVSTNANYKITFMLDSAAMITVHTPRRGLIDVKPLGVIWGKFSEFYSKKNTIMFDDIGRNFLMNPQNGLKIRPFMKAHLNRDKDKGLLKLTQYLKEIAKLDDFLGLNHKYWERYLSKKQGQ.

N-acetylalanine is present on alanine 2. Residues 3 to 81 form the Ubiquitin-like domain; the sequence is LPIIVKWGGQ…IMMMGTREES (79 aa). Residue lysine 117 is modified to N6-acetyllysine. Residues 133–294 form the FCP1 homology domain; the sequence is PREGKKLLVL…LKLTQYLKEI (162 aa). Positions 143, 145, and 253 each coordinate Mg(2+).

Requires Mg(2+) as cofactor.

The protein localises to the nucleus. It catalyses the reaction O-phospho-L-seryl-[protein] + H2O = L-seryl-[protein] + phosphate. The enzyme catalyses O-phospho-L-threonyl-[protein] + H2O = L-threonyl-[protein] + phosphate. Functionally, dephosphorylates 26S nuclear proteasomes, thereby decreasing their proteolytic activity. Recruited to the 19S regulatory particle of the 26S proteasome through its interaction with 19S component PSMD2/RPN1. Once recruited, dephosphorylates 19S component PSMC2/RPT1 which impairs PSMC2 ATPase activity and disrupts 26S proteasome assembly. Has also been reported to stimulate the proteolytic activity of the 26S proteasome. The polypeptide is Ubiquitin-like domain-containing CTD phosphatase 1 (UBLCP1) (Pongo abelii (Sumatran orangutan)).